The sequence spans 412 residues: BSD domain-containing protein 1 (412 aa).

The BSD domain maps to 145 to 197 (WLSTFSLEERKAEISELLVSSPAIRALYTKMVPAAVAHAEFWQRYFYKVFQLE). The span at 208-217 (QRAEQTDHSE) shows a compositional bias: basic and acidic residues. 3 disordered regions span residues 208–227 (QRAE…EDEE), 253–272 (VTVA…ASLS), and 298–412 (ESVT…ENWE). Polar residues-rich tracts occupy residues 259-272 (PESS…ASLS) and 298-308 (ESVTIRVTQPS). Ser-308 bears the Phosphoserine mark. The span at 328–349 (PEERPAPREETAREDMAQDLRV) shows a compositional bias: basic and acidic residues. Over residues 353–372 (NSDSGKSTPSNNGKKGSSTD) the composition is skewed to polar residues. Acidic residues-rich tracts occupy residues 373-390 (VSED…EEEV) and 400-412 (TEEL…ENWE).

The polypeptide is BSD domain-containing protein 1 (bsdc1) (Danio rerio (Zebrafish)).